The following is a 131-amino-acid chain: Large ribosomal subunit protein bL17 (131 aa).

The protein belongs to the bacterial ribosomal protein bL17 family. As to quaternary structure, part of the 50S ribosomal subunit. Contacts protein L32.

This chain is Large ribosomal subunit protein bL17, found in Burkholderia ambifaria (strain MC40-6).